The following is a 217-amino-acid chain: Probable transaldolase (217 aa).

K83 serves as the catalytic Schiff-base intermediate with substrate.

It belongs to the transaldolase family. Type 3B subfamily.

It is found in the cytoplasm. The enzyme catalyses D-sedoheptulose 7-phosphate + D-glyceraldehyde 3-phosphate = D-erythrose 4-phosphate + beta-D-fructose 6-phosphate. Its pathway is carbohydrate degradation; pentose phosphate pathway; D-glyceraldehyde 3-phosphate and beta-D-fructose 6-phosphate from D-ribose 5-phosphate and D-xylulose 5-phosphate (non-oxidative stage): step 2/3. Functionally, transaldolase is important for the balance of metabolites in the pentose-phosphate pathway. The chain is Probable transaldolase from Novosphingobium aromaticivorans (strain ATCC 700278 / DSM 12444 / CCUG 56034 / CIP 105152 / NBRC 16084 / F199).